A 490-amino-acid chain; its full sequence is Cytochrome P450 2C20 (490 aa).

Residue cysteine 435 participates in heme binding.

It belongs to the cytochrome P450 family. Heme is required as a cofactor.

The protein localises to the endoplasmic reticulum membrane. It localises to the microsome membrane. It catalyses the reaction an organic molecule + reduced [NADPH--hemoprotein reductase] + O2 = an alcohol + oxidized [NADPH--hemoprotein reductase] + H2O + H(+). Functionally, cytochromes P450 are a group of heme-thiolate monooxygenases. In liver microsomes, this enzyme is involved in an NADPH-dependent electron transport pathway. It oxidizes a variety of structurally unrelated compounds, including steroids, fatty acids, and xenobiotics. This is Cytochrome P450 2C20 (CYP2C20) from Macaca fascicularis (Crab-eating macaque).